A 345-amino-acid chain; its full sequence is uncharacterized protein (345 aa).

The protein localises to the cell membrane. In terms of biological role, involved in potassium and divalent cation transport. Enhances the transport activity of the cation/potassium transporter CzcD. This is an uncharacterized protein from Bacillus subtilis (strain 168).